A 505-amino-acid polypeptide reads, in one-letter code: RNA-binding region-containing protein 3 (505 aa).

The region spanning 15–90 (KTLIIRHLPR…RTLVVEFAKD (76 aa)) is the RRM 1 domain. Disordered stretches follow at residues 96–123 (ILKD…QPSV), 193–236 (PPMF…EEER), 354–374 (AQVP…SEFI), and 486–505 (ARSA…GRKH). Positions 193–214 (PPMFEMPSGPLPPPFPPENPPL) are enriched in pro residues. Acidic residues-rich tracts occupy residues 221-235 (GSEE…DEEE) and 361-370 (EEQEEDEDIP). One can recognise an RRM 2 domain in the interval 405–488 (CRLYVKNVAK…KPLVVQFARS (84 aa)). Residues 491–505 (PKQESADPKKGGRKH) are compositionally biased toward basic and acidic residues.

Component of the U11/U12 snRNPs that are part of the U12-type spliceosome.

The protein localises to the nucleus. In terms of biological role, participates in pre-mRNA U12-dependent splicing, performed by the minor spliceosome which removes U12-type introns. U12-type introns comprise less than 1% of all non-coding sequences. The chain is RNA-binding region-containing protein 3 from Danio rerio (Zebrafish).